A 41-amino-acid chain; its full sequence is Chymotrypsin inhibitor (41 aa).

In terms of biological role, inhibits chymotrypsin. The chain is Chymotrypsin inhibitor from Eisenia hortensis (European nightcrawler).